Reading from the N-terminus, the 217-residue chain is Large ribosomal subunit protein eL6 (217 aa).

This sequence belongs to the eukaryotic ribosomal protein eL6 family. In terms of assembly, component of the large ribosomal subunit. May bind IPO9 with low affinity.

It localises to the cytoplasm. Its subcellular location is the cytosol. It is found in the rough endoplasmic reticulum. Its function is as follows. Component of the large ribosomal subunit. This is Large ribosomal subunit protein eL6 (rpl-6) from Caenorhabditis elegans.